A 124-amino-acid chain; its full sequence is Fluoride-specific ion channel FluC (124 aa).

The next 3 membrane-spanning stretches (helical) occupy residues 5 to 27 (LFVA…FMLQ), 70 to 90 (VGLL…LLLI), and 95 to 115 (WIKA…MVYL). Na(+) contacts are provided by G74 and T77.

The protein belongs to the fluoride channel Fluc/FEX (TC 1.A.43) family.

It localises to the cell inner membrane. The catalysed reaction is fluoride(in) = fluoride(out). Its activity is regulated as follows. Na(+) is not transported, but it plays an essential structural role and its presence is essential for fluoride channel function. Fluoride-specific ion channel. Important for reducing fluoride concentration in the cell, thus reducing its toxicity. This is Fluoride-specific ion channel FluC from Shewanella sediminis (strain HAW-EB3).